We begin with the raw amino-acid sequence, 556 residues long: MSVSAFNRRWAAVILEALTRHGVRHVCIAPGSRSTPLTLAAAENPAFIHHTHFDERGLGHLALGLAKVSQQPVAVIVTSGTAVANLYPALIEAGLTGEKLILLTADRPPELIDCGANQAIRQAGMFASHPSQTLSLPRPTQDIPARWLVSTIDNALAMLHAGALHINCPFAEPLYGDMNDTGLVWQQRLGDWWQDEKPWLREARRLASDKQRDWFFWRQKRGVVVAGRMSAEEGKKVAQWAQTLGWPLIGDVLSQTGQPLPCADLWLGNAKAVTELQQAQIVVQLGSSLTGKRLLQWQATCEPEEYWVIDNIEGRLDPAHHRGRRLVAKIADWLEMHPAEKRKPWCVEIPRLAELAWQRVVAQRDTFGEAQLAHRIRDYLPEQGQLFVGNSLVVRLIDALSQLPAGYPVYSNRGASGIDGLLSTAAGVQRASAKSTLAIVGDLSALYDLNALALLRQVSAPFVLIVVNNNGGQIFSLLPTPQSKRERFYLMPQNVHFDHAAAMFNLRYHRPENWEELESVLAGAWRTPATTVIELVVNDTDGAQTLQQLLAQVSHL.

The protein belongs to the TPP enzyme family. MenD subfamily. Homodimer. The cofactor is Mg(2+). Mn(2+) serves as cofactor. It depends on thiamine diphosphate as a cofactor.

The catalysed reaction is isochorismate + 2-oxoglutarate + H(+) = 5-enolpyruvoyl-6-hydroxy-2-succinyl-cyclohex-3-ene-1-carboxylate + CO2. Its pathway is quinol/quinone metabolism; 1,4-dihydroxy-2-naphthoate biosynthesis; 1,4-dihydroxy-2-naphthoate from chorismate: step 2/7. It functions in the pathway quinol/quinone metabolism; menaquinone biosynthesis. Functionally, catalyzes the thiamine diphosphate-dependent decarboxylation of 2-oxoglutarate and the subsequent addition of the resulting succinic semialdehyde-thiamine pyrophosphate anion to isochorismate to yield 2-succinyl-5-enolpyruvyl-6-hydroxy-3-cyclohexene-1-carboxylate (SEPHCHC). This is 2-succinyl-5-enolpyruvyl-6-hydroxy-3-cyclohexene-1-carboxylate synthase from Salmonella agona (strain SL483).